The primary structure comprises 1238 residues: DNA-directed RNA polymerase subunit beta (1238 aa).

The disordered stretch occupies residues 1187 to 1238 (EGREDTPPEEVYEESYEEGFEEEIEELPEDIDFEPDSFDIENDDLDLEDFDI). The segment covering 1193–1238 (PPEEVYEESYEEGFEEEIEELPEDIDFEPDSFDIENDDLDLEDFDI) has biased composition (acidic residues).

The protein belongs to the RNA polymerase beta chain family. In terms of assembly, the RNAP catalytic core consists of 2 alpha, 1 beta, 1 beta' and 1 omega subunit. When a sigma factor is associated with the core the holoenzyme is formed, which can initiate transcription.

It carries out the reaction RNA(n) + a ribonucleoside 5'-triphosphate = RNA(n+1) + diphosphate. Its function is as follows. DNA-dependent RNA polymerase catalyzes the transcription of DNA into RNA using the four ribonucleoside triphosphates as substrates. In Thermoanaerobacter pseudethanolicus (strain ATCC 33223 / 39E) (Clostridium thermohydrosulfuricum), this protein is DNA-directed RNA polymerase subunit beta.